We begin with the raw amino-acid sequence, 159 residues long: Transcriptional repressor NrdR (159 aa).

A zinc finger spans residues 3–34 (CPFCGAEDTSVVDSRISEEGARIRRRRRCVEC). The ATP-cone domain occupies 49–139 (PQVIKQDGNR…VYRSFEDVGD (91 aa)).

This sequence belongs to the NrdR family. Zn(2+) is required as a cofactor.

Its function is as follows. Negatively regulates transcription of bacterial ribonucleotide reductase nrd genes and operons by binding to NrdR-boxes. The sequence is that of Transcriptional repressor NrdR from Nitrosomonas europaea (strain ATCC 19718 / CIP 103999 / KCTC 2705 / NBRC 14298).